A 96-amino-acid polypeptide reads, in one-letter code: Aspartyl/glutamyl-tRNA(Asn/Gln) amidotransferase subunit C (96 aa).

The protein belongs to the GatC family. Heterotrimer of A, B and C subunits.

It carries out the reaction L-glutamyl-tRNA(Gln) + L-glutamine + ATP + H2O = L-glutaminyl-tRNA(Gln) + L-glutamate + ADP + phosphate + H(+). The enzyme catalyses L-aspartyl-tRNA(Asn) + L-glutamine + ATP + H2O = L-asparaginyl-tRNA(Asn) + L-glutamate + ADP + phosphate + 2 H(+). Functionally, allows the formation of correctly charged Asn-tRNA(Asn) or Gln-tRNA(Gln) through the transamidation of misacylated Asp-tRNA(Asn) or Glu-tRNA(Gln) in organisms which lack either or both of asparaginyl-tRNA or glutaminyl-tRNA synthetases. The reaction takes place in the presence of glutamine and ATP through an activated phospho-Asp-tRNA(Asn) or phospho-Glu-tRNA(Gln). The chain is Aspartyl/glutamyl-tRNA(Asn/Gln) amidotransferase subunit C from Bacillus anthracis (strain A0248).